The sequence spans 1020 residues: Non-canonical nonribosomal peptide synthetase hkm10 (1020 aa).

Residues 21 to 419 (QMLEDPDAIA…GRFDHQVKIR (399 aa)) are adenylation (A) domain. Positions 526-608 (QDKVPSEGAS…QLAHIVDRNQ (83 aa)) constitute a Carrier domain. Ser568 is modified (O-(pantetheine 4'-phosphoryl)serine). The short-chain dehydrogenase/reductase (R) domain stretch occupies residues 652 to 894 (LTGATGFVGA…FVPIDYVTST (243 aa)).

This sequence belongs to the NRP synthetase family.

The protein operates within secondary metabolite biosynthesis. Functionally, non-canonical nonribosomal peptide synthetase; part of the gene cluster that mediates the biosynthesis of hancockiamides, an unusual new family of N-cinnamoylated piperazines. The NRPS hkm10 and the NmrA-like reductase hkm9 are proposed to convert two molecules of L-Phe to the intermediary piperazine called xenocockiamide A. Xenocockiamide A is then converted to hancockiamide D via a series of hydroxylations and O-methylations. The tyrosinase hkm6 may catalyze an aromatic hydroxylation, then the 2-oxoglutarate-dependent Fe(II) dioxygenase hkm4 and the FAD-dependent phenol hydroxylase hkm7 may catalyze consecutive hydroxylations to install 2 more hydroxy groups, and the methyltransferase hkm8 probably catalyzes two methylations using 2 molecules of S-adenosyl-L-methionine (SAM). The NRPS hkm11 activates and transfers trans-cinnamate supplied by the PAL hkm12 to hancockiamide D and produces hancockiamide A. NRPS Hkm11 has the flexibility to tolerate the bulky hancockiamide G as a substrate and the absence of the acetyl-transferase hkm3 opens up the opportunity for hkm11 to introduce a second N-cinnamoyl moiety. The cytochrome P450 monooxygenase hkm5 catalyzes the methylenedioxy bridge formation, converting hancockiamide A into hancockiamide G. Hkm5 can also convert hancockiamide B into hancockiamide C, and hancockiamide D into hancockiamide H. The N-acetyltransferase hkm3 finally transfers an acetyl group to 1-N of piperazine, converting hancockiamide A into hancockiamide B and hancockiamide G into hancockiamide C. This is Non-canonical nonribosomal peptide synthetase hkm10 from Aspergillus hancockii.